The sequence spans 863 residues: Leucine--tRNA ligase (863 aa).

Residues 42 to 52 (PYPSGRLHMGH) carry the 'HIGH' region motif. Positions 622 to 626 (KMSKS) match the 'KMSKS' region motif. Residue Lys-625 coordinates ATP.

The protein belongs to the class-I aminoacyl-tRNA synthetase family.

The protein resides in the cytoplasm. The enzyme catalyses tRNA(Leu) + L-leucine + ATP = L-leucyl-tRNA(Leu) + AMP + diphosphate. In Shewanella sediminis (strain HAW-EB3), this protein is Leucine--tRNA ligase.